Consider the following 295-residue polypeptide: Protoheme IX farnesyltransferase (295 aa).

9 helical membrane passes run 7–27 (VTKPGIIFGNLISVIGGFLLA), 34–54 (VPLFILTMAGVSLVVASGCVF), 78–98 (LIAPGVSLWYASALGVAGIAL), 106–126 (LAALLAVLGFIVYVGVYSLYM), 131–151 (VYGTLVGSLSGAAPPVIGYCA), 161–181 (LILLAIFSLWQMPHSYAIAIF), 207–227 (ITLYILAFMVPTLMLFLGGYA), 228–248 (GYKYLIVATAVSVWWLGMALS), and 263–283 (LFMFSIVTITCLSVMMSVDFQ).

It belongs to the UbiA prenyltransferase family. Protoheme IX farnesyltransferase subfamily.

The protein resides in the cell inner membrane. It carries out the reaction heme b + (2E,6E)-farnesyl diphosphate + H2O = Fe(II)-heme o + diphosphate. The protein operates within porphyrin-containing compound metabolism; heme O biosynthesis; heme O from protoheme: step 1/1. Its function is as follows. Converts heme B (protoheme IX) to heme O by substitution of the vinyl group on carbon 2 of heme B porphyrin ring with a hydroxyethyl farnesyl side group. The sequence is that of Protoheme IX farnesyltransferase from Aeromonas salmonicida (strain A449).